The following is a 333-amino-acid chain: Peroxisome biogenesis protein 2 (333 aa).

Residues 1-38 are Peroxisomal matrix-facing; it reads MTPSTPADDAWIRSYQRLLPESQSLLASRRSVIPVAIS. The chain crosses the membrane as a helical span at residues 39-65; it reads RVNQFDAARLDVEMSAMLKEQLVKVFT. The Cytoplasmic segment spans residues 66–71; that stretch reads LMKPGM. A helical transmembrane segment spans residues 72-97; that stretch reads LFQYEPELDAFLEFLIWRFSIWVDKP. Over 98-131 the chain is Peroxisomal matrix; sequence TPGNALMNLRYRDERGVVAQHLGKVRTGLEGPGL. The chain crosses the membrane as a helical span at residues 132 to 158; the sequence is TSPQKIWYCVASVGGQYLFSRLQSFSA. Residues 159–168 are Cytoplasmic-facing; the sequence is FRRWGDSEQR. Residues 169–199 form a helical membrane-spanning segment; it reads PLARRLWTLVQRIEGIYKAASFLNLLSFLYT. Residues 200–226 lie on the Peroxisomal matrix side of the membrane; that stretch reads GRYRNLIEKALKARLVYRSPHMNRSVS. A helical transmembrane segment spans residues 227–250; that stretch reads FEYMNRQLVWNEFSEMLLLLLPLL. The Cytoplasmic portion of the chain corresponds to 251-333; sequence NSSAVKNILS…IQREGVSSGK (83 aa). Positions 277, 280, 293, 295, 298, 301, 314, and 317 each coordinate Zn(2+). Residues 277 to 318 form an RING-type zinc finger; it reads CPICQVDPAIPFIALPCQHRYCYYCIRTRCASAASFRCLRCN.

It belongs to the pex2/pex10/pex12 family. In terms of assembly, component of the PEX2-PEX10-PEX12 retrotranslocation channel. Interacts with DSK2a and DSK2b. Expressed in roots, stems, leaves, flowers, pollen, ovules, seeds and siliques.

Its subcellular location is the peroxisome membrane. The enzyme catalyses [E2 ubiquitin-conjugating enzyme]-S-ubiquitinyl-L-cysteine + [acceptor protein]-L-cysteine = [E2 ubiquitin-conjugating enzyme]-L-cysteine + [acceptor protein]-S-ubiquitinyl-L-cysteine.. It participates in protein modification; protein ubiquitination. In terms of biological role, E3 ubiquitin-protein ligase component of a retrotranslocation channel required for peroxisome organization by mediating export of the PEX5 receptor from peroxisomes to the cytosol, thereby promoting PEX5 recycling. The retrotranslocation channel is composed of PEX2, PEX10 and PEX12; each subunit contributing transmembrane segments that coassemble into an open channel that specifically allows the passage of PEX5 through the peroxisomal membrane. PEX2 also regulates peroxisome organization by acting as a E3 ubiquitin-protein ligase. PEX2 ubiquitinates PEX5 during its passage through the retrotranslocation channel: catalyzes monoubiquitination of PEX5 at 'Cys-6', a modification that acts as a signal for PEX5 extraction into the cytosol. This is Peroxisome biogenesis protein 2 (PEX2) from Arabidopsis thaliana (Mouse-ear cress).